Here is a 548-residue protein sequence, read N- to C-terminus: Probable aquaglyceroporin-4 (548 aa).

A compositionally biased stretch (polar residues) spans 1-22 (MAGTQDQSQDYFSKPTTPSTPG). Disordered regions lie at residues 1–63 (MAGT…LPST), 76–101 (SRGF…SHFH), and 158–270 (KEET…ESGD). The Cytoplasmic portion of the chain corresponds to 1–290 (MAGTQDQSQD…ARLRARHPEP (290 aa)). Residues 38–48 (PDRESGTERAK) show a composition bias toward basic and acidic residues. Composition is skewed to polar residues over residues 77–97 (RGFS…PQHS) and 171–200 (SRTT…SRTT). A compositionally biased stretch (basic and acidic residues) spans 249–265 (PDFKVDGEPLGHQEKPC). A helical membrane pass occupies residues 291–311 (LAEFLATAVAIFLGLTGTLSV). N312 carries N-linked (GlcNAc...) asparagine glycosylation. At 312–327 (NLSATQSQPYGTYETS) the chain is on the extracellular side. Residues 328 to 348 (CWAWGFAWMFGIYLGGGVSGA) traverse the membrane as a helical segment. Topologically, residues 349-369 (HMNPAISVSLSIFRGFPWRQC) are cytoplasmic. Residues 351 to 353 (NPA) carry the NPA 1 motif. Residues 370–390 (VIYVFVQFIASIVAGALAYAM) traverse the membrane as a helical segment. Over 391 to 420 (YADSINHVDPDMTKMSMTFFSTPREWVTLK) the chain is Extracellular. The helical transmembrane segment at 421 to 441 (SAFFNQVVGSAIMMIAVFALG) threads the bilayer. The Cytoplasmic portion of the chain corresponds to 442 to 448 (DDQNNPP). Residues 449-469 (GAGMHALVLGFLVTTLKFTLG) traverse the membrane as a helical segment. Topologically, residues 470–508 (YNIGSALNPASDFGPRVIAYAVGFRGDNVFHSGWWFYGP) are extracellular. The NPA 2 signature appears at 477–479 (NPA). A helical transmembrane segment spans residues 509 to 529 (WAATLIGSLLGCTLYDGFVFV). Over 530–548 (GSESPVNFRVDKRVKKLFN) the chain is Cytoplasmic.

The protein belongs to the MIP/aquaporin (TC 1.A.8) family.

The protein localises to the membrane. The catalysed reaction is H2O(in) = H2O(out). The enzyme catalyses glycerol(in) = glycerol(out). Probable water/glycerol channel that may have redundant functions with FgAQP2. In Gibberella zeae (strain ATCC MYA-4620 / CBS 123657 / FGSC 9075 / NRRL 31084 / PH-1) (Wheat head blight fungus), this protein is Probable aquaglyceroporin-4.